The primary structure comprises 247 residues: C-X-C motif chemokine 16 (247 aa).

The N-terminal stretch at M1–G26 is a signal peptide. The Extracellular portion of the chain corresponds to N27–A198. Disulfide bonds link C35-C65 and C37-C79. The interval I120–L152 is disordered. The segment covering T131–S147 has biased composition (low complexity). Residues L199–V219 traverse the membrane as a helical segment. Topologically, residues L220–L247 are cytoplasmic.

Belongs to the intercrine alpha (chemokine CxC) family. Post-translationally, glycosylated.

It localises to the membrane. Its function is as follows. Induces a strong chemotactic response. Induces calcium mobilization. Binds to CXCR6/Bonzo. Also acts as a scavenger receptor on macrophages, which specifically binds to OxLDL (oxidized low density lipoprotein), suggesting that it may be involved in pathophysiology such as atherogenesis. The sequence is that of C-X-C motif chemokine 16 (Cxcl16) from Rattus norvegicus (Rat).